We begin with the raw amino-acid sequence, 435 residues long: Serine carboxypeptidase-like 14 (435 aa).

The signal sequence occupies residues 1-23 (MGSWIPKLLLLQLVLLLTKHADS). 3 disulfides stabilise this stretch: Cys-82/Cys-325, Cys-246/Cys-260, and Cys-284/Cys-291. N-linked (GlcNAc...) asparagine glycosylation occurs at Asn-103. Ser-178 is an active-site residue. Asn-344 is a glycosylation site (N-linked (GlcNAc...) asparagine). Asp-360 is a catalytic residue. A glycan (N-linked (GlcNAc...) asparagine) is linked at Asn-376. Residue His-413 is part of the active site.

Belongs to the peptidase S10 family. Expressed in senescent leaves.

It is found in the secreted. Its function is as follows. Probable carboxypeptidase. This chain is Serine carboxypeptidase-like 14 (SCPL14), found in Arabidopsis thaliana (Mouse-ear cress).